A 909-amino-acid polypeptide reads, in one-letter code: DNA mismatch repair protein MutS (909 aa).

ATP is bound at residue 614–621 (GPNMAGKS). The disordered stretch occupies residues 798 to 827 (LEENSPQNNDISKESSSSSNSHDKLESSVI). Basic and acidic residues predominate over residues 818–827 (SHDKLESSVI).

It belongs to the DNA mismatch repair MutS family.

This protein is involved in the repair of mismatches in DNA. It is possible that it carries out the mismatch recognition step. This protein has a weak ATPase activity. This chain is DNA mismatch repair protein MutS, found in Clostridium novyi (strain NT).